A 173-amino-acid chain; its full sequence is Oleosin 18.5 kDa (173 aa).

The interval 1-45 (MADTARGTHHDIIGRDQYPMMGRDRDQYQMSGRGSDYSKSRQIAK) is polar. Residues 46–117 (AATAVTAGGS…AAITVFSWIY (72 aa)) form a hydrophobic region. The next 3 membrane-spanning stretches (helical) occupy residues 54–74 (GSLL…LTVA), 76–96 (PLLV…ALLI), and 97–117 (TGFL…SWIY). Residues 151–173 (YYGQQHTGGEHDRDRTRGGQHTT) form a disordered region. A compositionally biased stretch (basic and acidic residues) spans 158–167 (GGEHDRDRTR).

The protein belongs to the oleosin family.

The protein resides in the lipid droplet. It localises to the membrane. May have a structural role to stabilize the lipid body during desiccation of the seed by preventing coalescence of the oil. Probably interacts with both lipid and phospholipid moieties of lipid bodies. May also provide recognition signals for specific lipase anchorage in lipolysis during seedling growth. The chain is Oleosin 18.5 kDa from Arabidopsis thaliana (Mouse-ear cress).